Reading from the N-terminus, the 599-residue chain is Aspartate--tRNA(Asp/Asn) ligase (599 aa).

L-aspartate is bound at residue Glu-174. An aspartate region spans residues 198 to 201 (QLFK). Arg-220 contributes to the L-aspartate binding site. Residues 220-222 (RDE) and Gln-229 each bind ATP. Position 457 (His-457) interacts with L-aspartate. Glu-491 is a binding site for ATP. Arg-498 provides a ligand contact to L-aspartate. Residue 543–546 (GLDR) coordinates ATP.

It belongs to the class-II aminoacyl-tRNA synthetase family. Type 1 subfamily. In terms of assembly, homodimer.

The protein localises to the cytoplasm. It catalyses the reaction tRNA(Asx) + L-aspartate + ATP = L-aspartyl-tRNA(Asx) + AMP + diphosphate. Its function is as follows. Aspartyl-tRNA synthetase with relaxed tRNA specificity since it is able to aspartylate not only its cognate tRNA(Asp) but also tRNA(Asn). Reaction proceeds in two steps: L-aspartate is first activated by ATP to form Asp-AMP and then transferred to the acceptor end of tRNA(Asp/Asn). The protein is Aspartate--tRNA(Asp/Asn) ligase of Paraburkholderia phytofirmans (strain DSM 17436 / LMG 22146 / PsJN) (Burkholderia phytofirmans).